Reading from the N-terminus, the 595-residue chain is Probable Xaa-Pro aminopeptidase CHGG_02942 (595 aa).

The tract at residues Lys-51 to Val-76 is disordered. The span at Ser-52–Thr-66 shows a compositional bias: low complexity. Mn(2+) is bound by residues Asp-334, Asp-345, Glu-541, and Glu-563.

It belongs to the peptidase M24B family. It depends on Mn(2+) as a cofactor.

The enzyme catalyses Release of any N-terminal amino acid, including proline, that is linked to proline, even from a dipeptide or tripeptide.. Its function is as follows. Catalyzes the removal of a penultimate prolyl residue from the N-termini of peptides. This chain is Probable Xaa-Pro aminopeptidase CHGG_02942, found in Chaetomium globosum (strain ATCC 6205 / CBS 148.51 / DSM 1962 / NBRC 6347 / NRRL 1970) (Soil fungus).